The following is a 418-amino-acid chain: Serine hydroxymethyltransferase (418 aa).

(6S)-5,6,7,8-tetrahydrofolate is bound by residues leucine 117 and 121 to 123 (GHL). Position 225 is an N6-(pyridoxal phosphate)lysine (lysine 225).

The protein belongs to the SHMT family. In terms of assembly, homodimer. It depends on pyridoxal 5'-phosphate as a cofactor.

The protein resides in the cytoplasm. The catalysed reaction is (6R)-5,10-methylene-5,6,7,8-tetrahydrofolate + glycine + H2O = (6S)-5,6,7,8-tetrahydrofolate + L-serine. It participates in one-carbon metabolism; tetrahydrofolate interconversion. It functions in the pathway amino-acid biosynthesis; glycine biosynthesis; glycine from L-serine: step 1/1. Its function is as follows. Catalyzes the reversible interconversion of serine and glycine with tetrahydrofolate (THF) serving as the one-carbon carrier. This reaction serves as the major source of one-carbon groups required for the biosynthesis of purines, thymidylate, methionine, and other important biomolecules. Also exhibits THF-independent aldolase activity toward beta-hydroxyamino acids, producing glycine and aldehydes, via a retro-aldol mechanism. This chain is Serine hydroxymethyltransferase, found in Mycoplasma mobile (strain ATCC 43663 / 163K / NCTC 11711) (Mesomycoplasma mobile).